Reading from the N-terminus, the 341-residue chain is 4-hydroxy-2-oxovalerate aldolase (341 aa).

Residues 9–259 enclose the Pyruvate carboxyltransferase domain; that stretch reads VRITEVCLRD…KLDIDLYKMM (251 aa). 17-18 contributes to the substrate binding site; it reads RD. D18 is a binding site for Mn(2+). Catalysis depends on H21, which acts as the Proton acceptor. Residues S171 and H198 each contribute to the substrate site. Mn(2+) contacts are provided by H198 and H200. Y289 contributes to the substrate binding site.

This sequence belongs to the 4-hydroxy-2-oxovalerate aldolase family.

The catalysed reaction is (S)-4-hydroxy-2-oxopentanoate = acetaldehyde + pyruvate. In Bacillus cereus (strain ATCC 10987 / NRS 248), this protein is 4-hydroxy-2-oxovalerate aldolase.